The chain runs to 363 residues: Biotin synthase (363 aa).

Phosphoserine is present on residues S13, S14, and S17. Positions 54 to 276 constitute a Radical SAM core domain; sequence KKVQQCTLLS…IATARICMPK (223 aa). 3 residues coordinate [4Fe-4S] cluster: C69, C73, and C76. Residues C113, C146, C206, and R280 each coordinate [2Fe-2S] cluster. Residues 337–363 are disordered; that stretch reads EYGTSTEGEDGTFTLPPKERLAPSPSL.

This sequence belongs to the radical SAM superfamily. Biotin synthase family. It depends on [4Fe-4S] cluster as a cofactor. The cofactor is [2Fe-2S] cluster.

The catalysed reaction is (4R,5S)-dethiobiotin + (sulfur carrier)-SH + 2 reduced [2Fe-2S]-[ferredoxin] + 2 S-adenosyl-L-methionine = (sulfur carrier)-H + biotin + 2 5'-deoxyadenosine + 2 L-methionine + 2 oxidized [2Fe-2S]-[ferredoxin]. It participates in cofactor biosynthesis; biotin biosynthesis; biotin from 7,8-diaminononanoate: step 2/2. Its function is as follows. Catalyzes the last step of biotin biosynthesis, the conversion of dethiobiotin to biotin. The protein is Biotin synthase (bio2) of Schizosaccharomyces pombe (strain 972 / ATCC 24843) (Fission yeast).